Here is a 168-residue protein sequence, read N- to C-terminus: GPI-anchored protein LLG1 (168 aa).

The first 23 residues, 1-23, serve as a signal peptide directing secretion; the sequence is MELLSRALFFFLLLSVLSSFSSS. N57 carries N-linked (GlcNAc...) asparagine glycosylation. N144 is lipidated: GPI-anchor amidated asparagine. The propeptide at 145–168 is removed in mature form; that stretch reads AATTSSSRLWLTVSAALLVFVKLF.

In terms of assembly, interacts with FER. In terms of tissue distribution, expressed in pollen, pollen tubes, sporophytic pistil tissues, in the early stages of female gametophyte development, and in unfertilized, mature ovules. Expressed in roots, lateral roots, shoots, cotyledons, petioles, developing leaves and anther filaments.

Its subcellular location is the cell membrane. Its function is as follows. Component of the FER-regulated Rho GTPase signaling complex. Acts as a chaperone and coreceptor for FER. Required for localization of FER to the plasma membrane. The chain is GPI-anchored protein LLG1 from Arabidopsis thaliana (Mouse-ear cress).